Consider the following 452-residue polypeptide: NADH-quinone oxidoreductase subunit H (452 aa).

9 consecutive transmembrane segments (helical) span residues 28–48 (IILI…LMMI), 96–116 (VIYI…FSVI), 136–156 (LPVA…GIVL), 177–197 (VISY…YAGT), 210–230 (IWFA…MIGE), 264–286 (AEYV…GYLA), 301–321 (WWPA…FVWV), 335–355 (KLGW…VAVI), and 366–386 (YVTA…LWAW).

It belongs to the complex I subunit 1 family. As to quaternary structure, NDH-1 is composed of 14 different subunits. Subunits NuoA, H, J, K, L, M, N constitute the membrane sector of the complex.

The protein localises to the cell membrane. The catalysed reaction is a quinone + NADH + 5 H(+)(in) = a quinol + NAD(+) + 4 H(+)(out). NDH-1 shuttles electrons from NADH, via FMN and iron-sulfur (Fe-S) centers, to quinones in the respiratory chain. The immediate electron acceptor for the enzyme in this species is believed to be ubiquinone. Couples the redox reaction to proton translocation (for every two electrons transferred, four hydrogen ions are translocated across the cytoplasmic membrane), and thus conserves the redox energy in a proton gradient. This subunit may bind ubiquinone. The sequence is that of NADH-quinone oxidoreductase subunit H from Thermobifida fusca (strain YX).